Consider the following 193-residue polypeptide: dCTP deaminase (193 aa).

DCTP-binding positions include 110-115, Asp-128, 136-138, Tyr-171, Lys-178, and Gln-182; these read RSSLAR and VLE. Glu-138 (proton donor/acceptor) is an active-site residue. Positions 171–193 are disordered; the sequence is YNKRKNAKYKDQQDAVASRISQD.

This sequence belongs to the dCTP deaminase family. Homotrimer.

The catalysed reaction is dCTP + H2O + H(+) = dUTP + NH4(+). It functions in the pathway pyrimidine metabolism; dUMP biosynthesis; dUMP from dCTP (dUTP route): step 1/2. Functionally, catalyzes the deamination of dCTP to dUTP. The polypeptide is dCTP deaminase (Shewanella oneidensis (strain ATCC 700550 / JCM 31522 / CIP 106686 / LMG 19005 / NCIMB 14063 / MR-1)).